We begin with the raw amino-acid sequence, 380 residues long: Opsin-2 (380 aa).

The Extracellular portion of the chain corresponds to 1–51 (MVNTTDFYPVPAAMAYESSVGLPLLGWNVPTEHLDLVHPHWRSFQVPNKYW). The N-linked (GlcNAc...) asparagine glycan is linked to asparagine 3. The helical transmembrane segment at 52–76 (HFGLAFVYFMLMCMSSLGNGIVLWI) threads the bilayer. The Cytoplasmic segment spans residues 77–88 (YATTKSIRTPSN). The helical transmembrane segment at 89-115 (MFIVNLALFDVLMLLEMPMLVVSSLFY) threads the bilayer. Residues 116 to 128 (QRPVGWELGCDIY) are Extracellular-facing. Cysteines 125 and 202 form a disulfide. The helical transmembrane segment at 129–148 (AALGSVAGIGSAINNAAIAF) threads the bilayer. The Cytoplasmic segment spans residues 149 to 166 (DRYRTISCPIDGRLTQGQ). The helical transmembrane segment at 167-191 (VLALIAGTWVWTLPFTLMPLLRIWS) threads the bilayer. Residues 192-215 (RFTAEGFLTTCSFDYLTDDEDTKV) are Extracellular-facing. A helical membrane pass occupies residues 216-243 (FVGCIFAWSYAFPLCLICCFYYRLIGAV). At 244-279 (REHEKMLRDQAKKMNVKSLQSNADTEAQSAEIRIAK) the chain is on the cytoplasmic side. Residues 280 to 303 (VALTIFFLFLCSWTPYAVVAMIGA) traverse the membrane as a helical segment. Residues 304–311 (FGNRAALT) are Extracellular-facing. The chain crosses the membrane as a helical span at residues 312–336 (PLSTMIPAVTAKIVSCIDPWVYAIN). The residue at position 323 (lysine 323) is an N6-(retinylidene)lysine. The Cytoplasmic segment spans residues 337-380 (HPRFRAEVQKRMKWLHLGEDARSSKSDTSSTATDRTVGNVSASA). The interval 358 to 380 (RSSKSDTSSTATDRTVGNVSASA) is disordered. Over residues 362 to 372 (SDTSSTATDRT) the composition is skewed to low complexity.

It belongs to the G-protein coupled receptor 1 family. Opsin subfamily. Post-translationally, phosphorylated on some or all of the serine and threonine residues present in the C-terminal region.

The protein resides in the membrane. Functionally, visual pigments are the light-absorbing molecules that mediate vision. They consist of an apoprotein, opsin, covalently linked to cis-retinal. This chain is Opsin-2 (Lo2), found in Schistocerca gregaria (Desert locust).